Consider the following 222-residue polypeptide: MAEKPKLHYFNARGRMESTRWLLAAAGVEFEEKFIKSAEDLDKLRNDGYLMFQQVPMVEIDGMKLVQTRAILNYIASKYNLYGKDIKERALIDMYIEGIADLGEMILLLPVCPPEEKDAKLALIKEKIKNRYFPAFEKVLKSHGQDYLVGNKLSRADIHLVELLYYVEELDSSLISSFPLLKALKTRISNLPTVKKFLQPGSPRKPPMDEKSLEEARKIFRF.

M1 is modified (N-acetylmethionine). Position 2 is an N-acetylalanine; in Glutathione S-transferase A1, N-terminally processed (A2). In terms of domain architecture, GST N-terminal spans 3 to 83; it reads EKPKLHYFNA…YIASKYNLYG (81 aa). K4 carries the N6-succinyllysine modification. Glutathione contacts are provided by residues Y9, R45, 54–55, and 67–68; these read QV and QT. Residues 85–207 enclose the GST C-terminal domain; the sequence is DIKERALIDM…LQPGSPRKPP (123 aa).

Belongs to the GST superfamily. Alpha family. As to quaternary structure, homodimer or heterodimer of GSTA1 and GSTA2. In terms of tissue distribution, liver.

The protein resides in the cytoplasm. It carries out the reaction RX + glutathione = an S-substituted glutathione + a halide anion + H(+). The enzyme catalyses prostaglandin A2 + glutathione = prostaglandin A2-S-(R)-glutathione. The catalysed reaction is prostaglandin J2 + glutathione = prostaglandin J2-S-(R)-glutathione. It catalyses the reaction (13S)-hydroperoxy-(9Z,11E)-octadecadienoate + 2 glutathione = (13S)-hydroxy-(9Z,11E)-octadecadienoate + glutathione disulfide + H2O. It carries out the reaction androst-5-ene-3,17-dione = androst-4-ene-3,17-dione. With respect to regulation, the isomerase activity is inhibited by S-methylglutathione (GSMe). Its function is as follows. Glutathione S-transferase that catalyzes the nucleophilic attack of the sulfur atom of glutathione on the electrophilic groups of a wide range of exogenous and endogenous compounds. Involved in the formation of glutathione conjugates of both prostaglandin A2 (PGA2) and prostaglandin J2 (PGJ2). It also catalyzes the isomerization of D5-androstene-3,17-dione (AD) into D4-androstene-3,17-dione and may therefore play an important role in hormone biosynthesis. Through its glutathione-dependent peroxidase activity toward the fatty acid hydroperoxide (13S)-hydroperoxy-(9Z,11E)-octadecadienoate/13-HPODE it is also involved in the metabolism of oxidized linoleic acid. This Homo sapiens (Human) protein is Glutathione S-transferase A1 (GSTA1).